The primary structure comprises 268 residues: Small ribosomal subunit protein uS2 (268 aa).

The tract at residues S233 to A268 is disordered.

Belongs to the universal ribosomal protein uS2 family.

In Stenotrophomonas maltophilia (strain K279a), this protein is Small ribosomal subunit protein uS2.